We begin with the raw amino-acid sequence, 669 residues long: L-type lectin-domain containing receptor kinase V.9 (669 aa).

The N-terminal stretch at 1–21 is a signal peptide; sequence MKFFVLVLLLVLQFFSNKALS. The Extracellular portion of the chain corresponds to 22–286; that stretch reads QSEEGEFGFN…RDSRSTSVKK (265 aa). The tract at residues 38-259 is legume-lectin like; sequence SGIAITNSKG…SHYILGWTFK (222 aa). N-linked (GlcNAc...) asparagine glycosylation is found at Asn53, Asn75, Asn124, Asn206, and Asn261. Residues 287-307 traverse the membrane as a helical segment; sequence ILAISLSLTSLAILVFLTISY. The Cytoplasmic portion of the chain corresponds to 308–669; it reads MLFLKRKKLM…FTEPFVSHGR (362 aa). A Protein kinase domain is found at 344–603; sequence FRNSELLGKG…LGLFCSHPVA (260 aa). Residues 350 to 358 and Lys373 each bind ATP; that span reads LGKGGFGKV. Asp469 acts as the Proton acceptor in catalysis.

It in the C-terminal section; belongs to the protein kinase superfamily. Ser/Thr protein kinase family. In the N-terminal section; belongs to the leguminous lectin family.

The protein localises to the cell membrane. It carries out the reaction L-seryl-[protein] + ATP = O-phospho-L-seryl-[protein] + ADP + H(+). The enzyme catalyses L-threonyl-[protein] + ATP = O-phospho-L-threonyl-[protein] + ADP + H(+). In Arabidopsis thaliana (Mouse-ear cress), this protein is L-type lectin-domain containing receptor kinase V.9 (LECRK59).